Here is a 126-residue protein sequence, read N- to C-terminus: Holo-[acyl-carrier-protein] synthase (126 aa).

Residues D9 and E58 each contribute to the Mg(2+) site.

This sequence belongs to the P-Pant transferase superfamily. AcpS family. Mg(2+) is required as a cofactor.

It localises to the cytoplasm. The enzyme catalyses apo-[ACP] + CoA = holo-[ACP] + adenosine 3',5'-bisphosphate + H(+). In terms of biological role, transfers the 4'-phosphopantetheine moiety from coenzyme A to a Ser of acyl-carrier-protein. The sequence is that of Holo-[acyl-carrier-protein] synthase from Salmonella agona (strain SL483).